The following is a 748-amino-acid chain: Phosphoribosylformylglycinamidine synthase subunit PurL (748 aa).

The active site involves His-47. 2 residues coordinate ATP: Tyr-50 and Lys-90. Residue Glu-92 coordinates Mg(2+). Residues 93–96 (SHNH) and Arg-115 each bind substrate. The active-site Proton acceptor is the His-94. Asp-116 lines the Mg(2+) pocket. Gln-240 provides a ligand contact to substrate. Residue Asp-268 participates in Mg(2+) binding. Residue 312–314 (ESQ) coordinates substrate. ATP contacts are provided by Asn-500 and Gly-537. Residue Asn-538 coordinates Mg(2+). Ser-540 provides a ligand contact to substrate.

The protein belongs to the FGAMS family. In terms of assembly, monomer. Part of the FGAM synthase complex composed of 1 PurL, 1 PurQ and 2 PurS subunits.

Its subcellular location is the cytoplasm. It catalyses the reaction N(2)-formyl-N(1)-(5-phospho-beta-D-ribosyl)glycinamide + L-glutamine + ATP + H2O = 2-formamido-N(1)-(5-O-phospho-beta-D-ribosyl)acetamidine + L-glutamate + ADP + phosphate + H(+). The protein operates within purine metabolism; IMP biosynthesis via de novo pathway; 5-amino-1-(5-phospho-D-ribosyl)imidazole from N(2)-formyl-N(1)-(5-phospho-D-ribosyl)glycinamide: step 1/2. Part of the phosphoribosylformylglycinamidine synthase complex involved in the purines biosynthetic pathway. Catalyzes the ATP-dependent conversion of formylglycinamide ribonucleotide (FGAR) and glutamine to yield formylglycinamidine ribonucleotide (FGAM) and glutamate. The FGAM synthase complex is composed of three subunits. PurQ produces an ammonia molecule by converting glutamine to glutamate. PurL transfers the ammonia molecule to FGAR to form FGAM in an ATP-dependent manner. PurS interacts with PurQ and PurL and is thought to assist in the transfer of the ammonia molecule from PurQ to PurL. This Leptospira biflexa serovar Patoc (strain Patoc 1 / Ames) protein is Phosphoribosylformylglycinamidine synthase subunit PurL.